Reading from the N-terminus, the 444-residue chain is Docking protein 3 (444 aa).

The PH domain occupies 7-123 (PVKDGILYQQ…WVDPICQLAF (117 aa)). Residue serine 138 is modified to Phosphoserine. The IRS-type PTB domain occupies 157–261 (EVTEFPVIVQ…ARQRERLPEL (105 aa)). At serine 274 the chain carries Phosphoserine. Positions 278–299 (LEPPGELREVAPGFELPTPRKL) are disordered. Phosphoserine occurs at positions 308 and 314. A Phosphotyrosine modification is found at tyrosine 325. The interval 354 to 390 (GLTNGGPEAQEGPPGGRSPLGSPIYHNTEDLSWPGSA) is disordered. The span at 358–376 (GGPEAQEGPPGGRSPLGSP) shows a compositional bias: low complexity. Serine 371 bears the Phosphoserine mark.

Belongs to the DOK family. Type A subfamily. On tyrosine phosphorylation, interacts with CSK and INPP5D/SHIP1 via their SH2 domains. Both Tyr-325 and Tyr-343 are required for interaction with INPP5D. Only Tyr-325 is required for interaction with CSK. Binds ABL1 through the PTB domain and in a kinase-dependent manner. Does not interact with RasGAP. Post-translationally, constitutively tyrosine-phosphorylated. In terms of processing, on IL2 stimulation, phosphorylated on C-terminal tyrosine residues possibly by Src kinases. Can also be phosphorylated by ABL1 kinase. Predominantly expressed in bone marrow, spleen and lung. Low levels in heart, brain, liver, muscle, thymus, kidney and testis. Highly expressed in B-cells and macrophages.

It is found in the cytoplasm. The protein resides in the cell membrane. In terms of biological role, DOK proteins are enzymatically inert adaptor or scaffolding proteins. They provide a docking platform for the assembly of multimolecular signaling complexes. DOK3 is a negative regulator of JNK signaling in B-cells through interaction with INPP5D/SHIP1. May modulate ABL1 function. This Mus musculus (Mouse) protein is Docking protein 3 (Dok3).